The chain runs to 124 residues: Histone H2A, embryonic (124 aa).

The segment covering 1–18 (MSGRGKSGKARTKAKTRS) has biased composition (basic residues). Residues 1-21 (MSGRGKSGKARTKAKTRSSRA) are disordered. Residue Ser2 is modified to N-acetylserine. Ser2 carries the phosphoserine modification. N5-methylglutamine is present on Gln104. Lys119 participates in a covalent cross-link: Glycyl lysine isopeptide (Lys-Gly) (interchain with G-Cter in ubiquitin).

It belongs to the histone H2A family. As to quaternary structure, the nucleosome is a histone octamer containing two molecules each of H2A, H2B, H3 and H4 assembled in one H3-H4 heterotetramer and two H2A-H2B heterodimers. The octamer wraps approximately 147 bp of DNA. Post-translationally, monoubiquitination of Lys-119 gives a specific tag for epigenetic transcriptional repression. In terms of processing, phosphorylation of Ser-2 directly represses transcription.

The protein localises to the nucleus. It localises to the chromosome. Core component of nucleosome. Nucleosomes wrap and compact DNA into chromatin, limiting DNA accessibility to the cellular machineries which require DNA as a template. Histones thereby play a central role in transcription regulation, DNA repair, DNA replication and chromosomal stability. DNA accessibility is regulated via a complex set of post-translational modifications of histones, also called histone code, and nucleosome remodeling. This Psammechinus miliaris (Green sea urchin) protein is Histone H2A, embryonic.